A 148-amino-acid polypeptide reads, in one-letter code: 3-hydroxyacyl-[acyl-carrier-protein] dehydratase FabZ (148 aa).

His47 is a catalytic residue.

It belongs to the thioester dehydratase family. FabZ subfamily.

Its subcellular location is the cytoplasm. The catalysed reaction is a (3R)-hydroxyacyl-[ACP] = a (2E)-enoyl-[ACP] + H2O. In terms of biological role, involved in unsaturated fatty acids biosynthesis. Catalyzes the dehydration of short chain beta-hydroxyacyl-ACPs and long chain saturated and unsaturated beta-hydroxyacyl-ACPs. The sequence is that of 3-hydroxyacyl-[acyl-carrier-protein] dehydratase FabZ from Hydrogenobaculum sp. (strain Y04AAS1).